The chain runs to 401 residues: Imidazolonepropionase (401 aa).

H70 and H72 together coordinate Fe(3+). Positions 70 and 72 each coordinate Zn(2+). Residues R79, Y142, and H175 each contribute to the 4-imidazolone-5-propanoate site. An N-formimidoyl-L-glutamate-binding site is contributed by Y142. H238 contributes to the Fe(3+) binding site. H238 lines the Zn(2+) pocket. Q241 is a binding site for 4-imidazolone-5-propanoate. Residue D313 participates in Fe(3+) binding. A Zn(2+)-binding site is contributed by D313. N-formimidoyl-L-glutamate-binding residues include N315 and G317. A 4-imidazolone-5-propanoate-binding site is contributed by T318.

It belongs to the metallo-dependent hydrolases superfamily. HutI family. Zn(2+) serves as cofactor. The cofactor is Fe(3+).

It is found in the cytoplasm. It catalyses the reaction 4-imidazolone-5-propanoate + H2O = N-formimidoyl-L-glutamate. Its pathway is amino-acid degradation; L-histidine degradation into L-glutamate; N-formimidoyl-L-glutamate from L-histidine: step 3/3. Functionally, catalyzes the hydrolytic cleavage of the carbon-nitrogen bond in imidazolone-5-propanoate to yield N-formimidoyl-L-glutamate. It is the third step in the universal histidine degradation pathway. The protein is Imidazolonepropionase of Xanthomonas euvesicatoria pv. vesicatoria (strain 85-10) (Xanthomonas campestris pv. vesicatoria).